Consider the following 368-residue polypeptide: DNA replication and repair protein RecF (368 aa).

30–37 serves as a coordination point for ATP; that stretch reads GNNAQGKT.

It belongs to the RecF family.

Its subcellular location is the cytoplasm. Its function is as follows. The RecF protein is involved in DNA metabolism; it is required for DNA replication and normal SOS inducibility. RecF binds preferentially to single-stranded, linear DNA. It also seems to bind ATP. The polypeptide is DNA replication and repair protein RecF (Streptococcus pyogenes serotype M49 (strain NZ131)).